We begin with the raw amino-acid sequence, 88 residues long: UPF0367 protein Synpcc7942_1638 (88 aa).

This sequence belongs to the UPF0367 family.

The protein is UPF0367 protein Synpcc7942_1638 of Synechococcus elongatus (strain ATCC 33912 / PCC 7942 / FACHB-805) (Anacystis nidulans R2).